The following is a 601-amino-acid chain: DNA topoisomerase I, mitochondrial (601 aa).

The N-terminal 50 residues, 1–50 (MRVVRLLRLRAALTLLGEVPRRPASRGVPGSRRTQKGSGARWEKEKHEDG), are a transit peptide targeting the mitochondrion. The segment at 22–48 (RPASRGVPGSRRTQKGSGARWEKEKHE) is disordered. Interaction with DNA stretches follow at residues 261–262 (KY), 324–329 (RAGNEK), and 421–423 (TAK). In terms of domain architecture, Topo IB-type catalytic spans 268-601 (CSKLKGETAW…LAMAGEDFEF (334 aa)). Tyrosine 559 serves as the catalytic O-(3'-phospho-DNA)-tyrosine intermediate.

The protein belongs to the type IB topoisomerase family. The cofactor is Ca(2+). Mg(2+) is required as a cofactor. In terms of tissue distribution, ubiquitous; highest in skeletal muscle, heart, brain and fetal liver.

It is found in the mitochondrion. The catalysed reaction is ATP-independent breakage of single-stranded DNA, followed by passage and rejoining.. Its function is as follows. Releases the supercoiling and torsional tension of DNA introduced during duplication of mitochondrial DNA by transiently cleaving and rejoining one strand of the DNA duplex. Introduces a single-strand break via transesterification at a target site in duplex DNA. The scissile phosphodiester is attacked by the catalytic tyrosine of the enzyme, resulting in the formation of a DNA-(3'-phosphotyrosyl)-enzyme intermediate and the expulsion of a 5'-OH DNA strand. The free DNA strand then rotates around the intact phosphodiester bond on the opposing strand, thus removing DNA supercoils. Finally, in the religation step, the DNA 5'-OH attacks the covalent intermediate to expel the active-site tyrosine and restore the DNA phosphodiester backbone. This chain is DNA topoisomerase I, mitochondrial (TOP1MT), found in Homo sapiens (Human).